We begin with the raw amino-acid sequence, 527 residues long: Tyrosine--tRNA ligase, cytoplasmic (527 aa).

Residue Y39 coordinates L-tyrosine. A 'HIGH' region motif is present at residues 44 to 52; it reads TTGKPHVAY. The L-tyrosine site is built by Y166, Q170, D173, and Q188. The 'KMSKS' region motif lies at 222–226; that stretch reads KMSSS. A Nuclear localization signal motif is present at residues 242 to 247; sequence KKKLKK. The interval 337 to 362 is disordered; it reads TNAAYPNPSKAKPAEKGTKNSEPETI. Residues 348-358 are compositionally biased toward basic and acidic residues; the sequence is KPAEKGTKNSE. The tRNA-binding domain occupies 363 to 467; sequence VPSRLDIRVG…AECCAGERVY (105 aa).

Belongs to the class-I aminoacyl-tRNA synthetase family. Homodimer.

It localises to the cytoplasm. The protein localises to the nucleus. It catalyses the reaction tRNA(Tyr) + L-tyrosine + ATP = L-tyrosyl-tRNA(Tyr) + AMP + diphosphate + H(+). Catalyzes the attachment of tyrosine to tRNA(Tyr) in a two-step reaction: tyrosine is first activated by ATP to form Tyr-AMP and then transferred to the acceptor end of tRNA(Tyr). The protein is Tyrosine--tRNA ligase, cytoplasmic (YARS1) of Gallus gallus (Chicken).